A 942-amino-acid chain; its full sequence is AP-1 complex subunit beta (942 aa).

6 HEAT repeats span residues 45-82 (KDVSMLFTHVLNCMQTHNLELKKLVYLYVMNYAKNHPD), 117-154 (NITEHLCEPLRHALKDQDPYVRKTAAVCVAKLYDVNPE), 156-193 (VENQGFLNILNDLLGDSNPMVVANAVASLTEIDEVSKK), 273-313 (DVIR…KRPE), 384-421 (RASERCIQVLLDLIQTKVNYVVQEAIIVIKDIFRKYPN), and 458-495 (DNAHELLNSFLEGFKDENSQVQLQLLTSIVKLFLKRPK). A disordered region spans residues 590 to 700 (GLRNKEEEDE…NDLSFLGGGG (111 aa)). The segment covering 596 to 609 (EEDEEEPDYVDDDN) has biased composition (acidic residues). Low complexity-rich tracts occupy residues 613-645 (QQGGQQQQGGYQQQQQQQQQGGYQQQQPQQQQP) and 664-677 (NNNNNNYGNNNNNN). Positions 678 to 693 (MYSPQPQQFNGNSNDL) are enriched in polar residues.

The protein belongs to the adaptor complexes large subunit family. As to quaternary structure, adaptor protein complex 1 (AP-1) is a heterotetramer composed of two large adaptins (gamma-type subunit and beta-type subunit), a medium adaptin (mu-type subunit) and a small adaptin (sigma-type subunit).

Its subcellular location is the golgi apparatus. The protein resides in the trans-Golgi network. It localises to the cytoplasmic vesicle. The protein localises to the clathrin-coated vesicle membrane. In terms of biological role, subunit of clathrin-associated adaptor protein complex 1 that plays a role in protein sorting in the trans-Golgi network (TGN) and endosomes. The AP complexes mediate the recruitment of clathrin to membranes and the recognition of sorting signals within the cytosolic tails of transmembrane cargo molecules. Also involved in early steps of phagocytosis and macropinocytosis. The sequence is that of AP-1 complex subunit beta (ap1b1) from Dictyostelium discoideum (Social amoeba).